We begin with the raw amino-acid sequence, 712 residues long: Polyribonucleotide nucleotidyltransferase (712 aa).

2 residues coordinate Mg(2+): aspartate 485 and aspartate 491. In terms of domain architecture, KH spans 552 to 611 (PKITTISVPKEKIRDVIGQGGKVIREIVEYSGAKIDINDDGTIMIAASSEDQATRAIERI). Positions 621–689 (GAIYTGKVVK…DRGKVKLSMR (69 aa)) constitute an S1 motif domain.

The protein belongs to the polyribonucleotide nucleotidyltransferase family. Requires Mg(2+) as cofactor.

The protein resides in the cytoplasm. It catalyses the reaction RNA(n+1) + phosphate = RNA(n) + a ribonucleoside 5'-diphosphate. Its function is as follows. Involved in mRNA degradation. Catalyzes the phosphorolysis of single-stranded polyribonucleotides processively in the 3'- to 5'-direction. This Gluconacetobacter diazotrophicus (strain ATCC 49037 / DSM 5601 / CCUG 37298 / CIP 103539 / LMG 7603 / PAl5) protein is Polyribonucleotide nucleotidyltransferase.